The sequence spans 475 residues: Bifunctional protein HldE (475 aa).

A ribokinase region spans residues 1–318; sequence MMQYSLKFNQ…ENAIHHREET (318 aa). Residue 195–198 participates in ATP binding; that stretch reads NMAE. Residue Asp-264 is part of the active site. The cytidylyltransferase stretch occupies residues 344–475; sequence MTNGCFDILH…DVIKKIQAIR (132 aa).

It in the N-terminal section; belongs to the carbohydrate kinase PfkB family. This sequence in the C-terminal section; belongs to the cytidylyltransferase family. As to quaternary structure, homodimer.

It catalyses the reaction D-glycero-beta-D-manno-heptose 7-phosphate + ATP = D-glycero-beta-D-manno-heptose 1,7-bisphosphate + ADP + H(+). It carries out the reaction D-glycero-beta-D-manno-heptose 1-phosphate + ATP + H(+) = ADP-D-glycero-beta-D-manno-heptose + diphosphate. The protein operates within nucleotide-sugar biosynthesis; ADP-L-glycero-beta-D-manno-heptose biosynthesis; ADP-L-glycero-beta-D-manno-heptose from D-glycero-beta-D-manno-heptose 7-phosphate: step 1/4. Its pathway is nucleotide-sugar biosynthesis; ADP-L-glycero-beta-D-manno-heptose biosynthesis; ADP-L-glycero-beta-D-manno-heptose from D-glycero-beta-D-manno-heptose 7-phosphate: step 3/4. It participates in bacterial outer membrane biogenesis; LOS core biosynthesis. Functionally, catalyzes the phosphorylation of D-glycero-D-manno-heptose 7-phosphate at the C-1 position to selectively form D-glycero-beta-D-manno-heptose-1,7-bisphosphate. Its function is as follows. Catalyzes the ADP transfer from ATP to D-glycero-beta-D-manno-heptose 1-phosphate, yielding ADP-D-glycero-beta-D-manno-heptose. The protein is Bifunctional protein HldE of Haemophilus ducreyi (strain 35000HP / ATCC 700724).